Here is a 101-residue protein sequence, read N- to C-terminus: MDIKIIKDKKNPLLNRRELDFIVKYEGSTPSRNDVRNKLAAMLNAPLELLVIQRIKTEYGMQESKGYAKLYEDADRMKQVEQEYVLKRNAVPGSETEGEEA.

Belongs to the eukaryotic ribosomal protein eS24 family.

In Methanosarcina mazei (strain ATCC BAA-159 / DSM 3647 / Goe1 / Go1 / JCM 11833 / OCM 88) (Methanosarcina frisia), this protein is Small ribosomal subunit protein eS24.